Consider the following 301-residue polypeptide: MSYFGLETFNENQSEENLDEESVILTLVPFKEEEEPNTDYATQSNVSSSTLDHTPPARSLVRHAGIKHPTRTIPSTCPPPSLPPIRDVSRNTLREWCRYHNLSTDGKKVEVYLRLRRHSYSKQECYIPNTSREARMKQGPKKSKIVFRGIGPPSGCQRKKEESGVLEILTSPKESTFAAWARIAMRAAQSMSKNRCPLPSNVEAFLPQATGSRWCVVHGRQLPADKKGWVRLQFLAGQTWVPDTPQRMNFLFLLPACIIPEPGVEDNLLCPECVHSNKKILRNFKIRSRAKKNALPPNMPP.

The disordered stretch occupies residues 31 to 85 (KEEEEPNTDYATQSNVSSSTLDHTPPARSLVRHAGIKHPTRTIPSTCPPPSLPPI). Positions 39–52 (DYATQSNVSSSTLD) are enriched in polar residues. Over residues 60-70 (LVRHAGIKHPT) the composition is skewed to basic residues. The region spanning 85-119 (IRDVSRNTLREWCRYHNLSTDGKKVEVYLRLRRHS) is the SAP domain.

In terms of assembly, interacts with DPPA4. As to expression, not detected in adult tissues.

The protein resides in the nucleus. Functionally, binds to target gene promoters, including NKX2-5 and SYCE1, but not GATA4, and may be involved in the maintenance of the active epigenetic status of these genes. The sequence is that of Developmental pluripotency-associated protein 2 (Dppa2) from Mus musculus (Mouse).